A 335-amino-acid chain; its full sequence is Putative zinc metalloprotease CPE1693 (335 aa).

Histidine 17 lines the Zn(2+) pocket. The active site involves glutamate 18. Histidine 21 serves as a coordination point for Zn(2+). Helical transmembrane passes span 88-110 (ILVM…IGLA), 262-284 (LLWF…FPAL), and 312-334 (TVGF…IFPI). Positions 96 to 174 (FMNYVLALII…PVELEIKRGN (79 aa)) constitute a PDZ domain.

The protein belongs to the peptidase M50B family. The cofactor is Zn(2+).

The protein resides in the cell membrane. This chain is Putative zinc metalloprotease CPE1693, found in Clostridium perfringens (strain 13 / Type A).